Consider the following 499-residue polypeptide: Glycerol kinase (499 aa).

Threonine 13 is an ADP binding site. ATP contacts are provided by threonine 13, threonine 14, and serine 15. Residue threonine 13 participates in sn-glycerol 3-phosphate binding. ADP is bound at residue arginine 17. 4 residues coordinate sn-glycerol 3-phosphate: arginine 83, glutamate 84, tyrosine 135, and aspartate 245. The glycerol site is built by arginine 83, glutamate 84, tyrosine 135, aspartate 245, and glutamine 246. Residues threonine 267 and glycine 310 each coordinate ADP. ATP-binding residues include threonine 267, glycine 310, glutamine 314, and glycine 411. Residues glycine 411 and asparagine 415 each coordinate ADP.

It belongs to the FGGY kinase family. In terms of assembly, homotetramer and homodimer (in equilibrium).

The enzyme catalyses glycerol + ATP = sn-glycerol 3-phosphate + ADP + H(+). Its pathway is polyol metabolism; glycerol degradation via glycerol kinase pathway; sn-glycerol 3-phosphate from glycerol: step 1/1. Its activity is regulated as follows. Activated by phosphorylation and inhibited by fructose 1,6-bisphosphate (FBP). In terms of biological role, key enzyme in the regulation of glycerol uptake and metabolism. Catalyzes the phosphorylation of glycerol to yield sn-glycerol 3-phosphate. In Halothermothrix orenii (strain H 168 / OCM 544 / DSM 9562), this protein is Glycerol kinase.